Here is a 446-residue protein sequence, read N- to C-terminus: Signal recognition particle protein (446 aa).

Residues 108 to 115 (GLQGAGKT), 191 to 195 (DTAGR), and 249 to 252 (TKLD) contribute to the GTP site.

The protein belongs to the GTP-binding SRP family. SRP54 subfamily. Part of the signal recognition particle protein translocation system, which is composed of SRP and FtsY. Interacts with a small cytoplasmic RNA (sc-RNA).

It is found in the cytoplasm. The catalysed reaction is GTP + H2O = GDP + phosphate + H(+). Involved in targeting and insertion of nascent membrane proteins into the cytoplasmic membrane. Binds to the hydrophobic signal sequence of the ribosome-nascent chain (RNC) as it emerges from the ribosomes. The SRP-RNC complex is then targeted to the cytoplasmic membrane where it interacts with the SRP receptor FtsY. Interaction with FtsY leads to the transfer of the RNC complex to the Sec translocase for insertion into the membrane, the hydrolysis of GTP by both Ffh and FtsY, and the dissociation of the SRP-FtsY complex into the individual components. The chain is Signal recognition particle protein from Bacillus subtilis (strain 168).